The primary structure comprises 522 residues: AAA ATPase forming ring-shaped complexes (522 aa).

Residues 1–26 (MGQEKHTDAASQSRDPEAVAAHENDQ) are disordered. Residues 20–57 (AAHENDQLRQRNHALAKALTRATEELRKAKAQLEQFMA) adopt a coiled-coil conformation. ATP is bound at residue 248–253 (GNGKTL).

It belongs to the AAA ATPase family. In terms of assembly, homohexamer. Assembles into a hexameric ring structure.

The protein is AAA ATPase forming ring-shaped complexes of Bifidobacterium animalis subsp. lactis (strain AD011).